The chain runs to 389 residues: Carbamoyl phosphate synthase small chain (389 aa).

A CPSase region spans residues Met1–Thr199. Residues Ser50, Gly251, and Gly253 each contribute to the L-glutamine site. A Glutamine amidotransferase type-1 domain is found at His203–Ala389. Catalysis depends on Cys279, which acts as the Nucleophile. L-glutamine is bound by residues Leu280, Gln283, Asn321, Gly323, and Phe324. Active-site residues include His363 and Glu365.

It belongs to the CarA family. As to quaternary structure, composed of two chains; the small (or glutamine) chain promotes the hydrolysis of glutamine to ammonia, which is used by the large (or ammonia) chain to synthesize carbamoyl phosphate. Tetramer of heterodimers (alpha,beta)4.

The enzyme catalyses hydrogencarbonate + L-glutamine + 2 ATP + H2O = carbamoyl phosphate + L-glutamate + 2 ADP + phosphate + 2 H(+). It carries out the reaction L-glutamine + H2O = L-glutamate + NH4(+). Its pathway is amino-acid biosynthesis; L-arginine biosynthesis; carbamoyl phosphate from bicarbonate: step 1/1. It participates in pyrimidine metabolism; UMP biosynthesis via de novo pathway; (S)-dihydroorotate from bicarbonate: step 1/3. In terms of biological role, small subunit of the glutamine-dependent carbamoyl phosphate synthetase (CPSase). CPSase catalyzes the formation of carbamoyl phosphate from the ammonia moiety of glutamine, carbonate, and phosphate donated by ATP, constituting the first step of 2 biosynthetic pathways, one leading to arginine and/or urea and the other to pyrimidine nucleotides. The small subunit (glutamine amidotransferase) binds and cleaves glutamine to supply the large subunit with the substrate ammonia. This chain is Carbamoyl phosphate synthase small chain, found in Haemophilus ducreyi (strain 35000HP / ATCC 700724).